Reading from the N-terminus, the 368-residue chain is Uroporphyrinogen decarboxylase (368 aa).

Residues R41 to R45, D91, Y168, S223, and H345 each bind substrate.

This sequence belongs to the uroporphyrinogen decarboxylase family. As to quaternary structure, homodimer.

It is found in the cytoplasm. The enzyme catalyses uroporphyrinogen III + 4 H(+) = coproporphyrinogen III + 4 CO2. The protein operates within porphyrin-containing compound metabolism; protoporphyrin-IX biosynthesis; coproporphyrinogen-III from 5-aminolevulinate: step 4/4. In terms of biological role, catalyzes the decarboxylation of four acetate groups of uroporphyrinogen-III to yield coproporphyrinogen-III. This Psychrobacter sp. (strain PRwf-1) protein is Uroporphyrinogen decarboxylase.